The sequence spans 503 residues: Probable Xaa-Pro aminopeptidase TSTA_094700 (503 aa).

Mn(2+) is bound by residues D277, D288, E428, and E467.

This sequence belongs to the peptidase M24B family. Requires Mn(2+) as cofactor.

The enzyme catalyses Release of any N-terminal amino acid, including proline, that is linked to proline, even from a dipeptide or tripeptide.. Its function is as follows. Catalyzes the removal of a penultimate prolyl residue from the N-termini of peptides. The chain is Probable Xaa-Pro aminopeptidase TSTA_094700 from Talaromyces stipitatus (strain ATCC 10500 / CBS 375.48 / QM 6759 / NRRL 1006) (Penicillium stipitatum).